The primary structure comprises 120 residues: uncharacterized protein (120 aa).

Residues 22–44 form a helical membrane-spanning segment; sequence ITVASCIGAAQGALFSIASALLL. The N-linked (GlcNAc...) asparagine glycan is linked to Asn-114.

It is found in the membrane. This is an uncharacterized protein from Saccharomyces cerevisiae (strain ATCC 204508 / S288c) (Baker's yeast).